Consider the following 85-residue polypeptide: Large ribosomal subunit protein bL27 (85 aa).

The segment at 1–21 is disordered; that stretch reads MAHKKGGGSTHNGRDSKPKML.

This sequence belongs to the bacterial ribosomal protein bL27 family.

The sequence is that of Large ribosomal subunit protein bL27 from Albidiferax ferrireducens (strain ATCC BAA-621 / DSM 15236 / T118) (Rhodoferax ferrireducens).